An 88-amino-acid polypeptide reads, in one-letter code: Putative membrane protein insertion efficiency factor (88 aa).

Residues 65 to 88 are disordered; the sequence is LDFVPPKKDKNDDSGHTCKAHHHH. Residues 69-80 show a composition bias toward basic and acidic residues; sequence PPKKDKNDDSGH.

It belongs to the UPF0161 family.

It localises to the cell membrane. In terms of biological role, could be involved in insertion of integral membrane proteins into the membrane. The protein is Putative membrane protein insertion efficiency factor of Listeria innocua serovar 6a (strain ATCC BAA-680 / CLIP 11262).